The chain runs to 328 residues: NADH:quinone reductase (328 aa).

FMN-binding positions include 22–24 (GMQ), T75, K124, A150, 178–180 (SGG), and 201–202 (GT).

This sequence belongs to the nitronate monooxygenase family. In terms of assembly, monomer. FMN is required as a cofactor.

It carries out the reaction a quinone + NADH + H(+) = a quinol + NAD(+). Its function is as follows. Catalyzes the NADH-dependent reduction of a broad spectrum of quinone substrates, generating the corresponding hydroquinones. Highly prefers NADH to NADPH as a reducing substrate. Also displays a small NADH oxidase activity. Does not exhibit nitronate monooxygenase activity; is inactive against propionate 3-nitronate, 3-nitropropionate, nitroethane, 1-nitropropane, 2-nitropropane, and the anionic forms ethylnitronate, propyl-1-nitronate, and propyl-2-nitronate. Has no azoreductase activity since it is not able to reduce the azo dye methyl red with NADH. May be required to maintain an appropriate [NAD(+)]/[NADH] ratio for the catabolism of fatty acids in P.aeruginosa PAO1. This is NADH:quinone reductase from Pseudomonas aeruginosa (strain ATCC 15692 / DSM 22644 / CIP 104116 / JCM 14847 / LMG 12228 / 1C / PRS 101 / PAO1).